Consider the following 168-residue polypeptide: Photosystem I assembly protein Ycf3 (168 aa).

TPR repeat units lie at residues 35 to 68, 72 to 105, and 120 to 153; these read AFTYYRDGMSAQSEGNYAEALQNYYEAMRPEIDP, SYILYNIGLIHTSNGEHTKALEYYFRALERNPFL, and GEEAIRQGDSEIAEAWFDQAAEYWKQAIALTPGN.

This sequence belongs to the Ycf3 family.

The protein resides in the plastid. It is found in the chloroplast thylakoid membrane. Functionally, essential for the assembly of the photosystem I (PSI) complex. May act as a chaperone-like factor to guide the assembly of the PSI subunits. This is Photosystem I assembly protein Ycf3 from Nuphar advena (Common spatterdock).